A 251-amino-acid chain; its full sequence is Probable transcriptional regulatory protein Arth_2304 (251 aa).

Belongs to the TACO1 family.

The protein localises to the cytoplasm. This chain is Probable transcriptional regulatory protein Arth_2304, found in Arthrobacter sp. (strain FB24).